The following is a 283-amino-acid chain: MAGLREFFKETVEEKLLQQMPDDVLQQTTPATQLLEKRRELEQVERALATQKEDFHVRMATLDQRKAELERKEYQLQESLLKFDRFLKENDARRERAEQKAASENEVAQAREEQVQNLRAELRSLQERKTRNRDILQRYSIFEAFMQTVLGEYPEYNEVQDVITRYKTLVATQQDLRSRDRNNQTEIERVRREMARYKEAHRVSMLDCSNKLATLRTAKERAHTETLYWENQLSAVQGAASKRTLLLGQIKMYAYPPAHPGTCPTRTWLALTREPRCCHEPPR.

2 coiled-coil regions span residues 31 to 139 (ATQL…LQRY) and 174 to 204 (QDLRSRDRNNQTEIERVRREMARYKEAHRVS).

The protein belongs to the CFAP73 family.

The polypeptide is Coiled-coil domain-containing protein 42 homolog (Monosiga brevicollis (Choanoflagellate)).